A 430-amino-acid chain; its full sequence is Adenylosuccinate synthetase (430 aa).

Residues 12–18 (GDEGKGK) and 40–42 (GHT) contribute to the GTP site. Asp13 acts as the Proton acceptor in catalysis. The Mg(2+) site is built by Asp13 and Gly40. Residues 13–16 (DEGK), 38–41 (NAGH), Thr128, Arg142, Gln223, Thr238, and Arg302 each bind IMP. Catalysis depends on His41, which acts as the Proton donor. Position 298-304 (298-304 (TTTGRPR)) interacts with substrate. GTP is bound by residues Arg304, 330–332 (SID), and 412–414 (SVG).

Belongs to the adenylosuccinate synthetase family. Homodimer. Mg(2+) serves as cofactor.

It localises to the cytoplasm. It catalyses the reaction IMP + L-aspartate + GTP = N(6)-(1,2-dicarboxyethyl)-AMP + GDP + phosphate + 2 H(+). Its pathway is purine metabolism; AMP biosynthesis via de novo pathway; AMP from IMP: step 1/2. Plays an important role in the de novo pathway of purine nucleotide biosynthesis. Catalyzes the first committed step in the biosynthesis of AMP from IMP. This Streptococcus pyogenes serotype M1 protein is Adenylosuccinate synthetase.